We begin with the raw amino-acid sequence, 537 residues long: CTP synthase (537 aa).

Residues 1–268 are amidoligase domain; it reads MPFKCIFLTG…ANFIGEKLKL (268 aa). Serine 14 serves as a coordination point for CTP. Serine 14 is a UTP binding site. ATP contacts are provided by residues 15-20 and aspartate 72; that span reads SLGKGL. Positions 72 and 142 each coordinate Mg(2+). Residues 149–151, 188–193, and lysine 224 each bind CTP; these read DIE and KSKPTQ. Residues 188-193 and lysine 224 contribute to the UTP site; that span reads KSKPTQ. Positions 293–533 constitute a Glutamine amidotransferase type-1 domain; that stretch reads KIGVVGKYVQ…IEAALVYSKD (241 aa). Glycine 352 contacts L-glutamine. Cysteine 379 serves as the catalytic Nucleophile; for glutamine hydrolysis. L-glutamine-binding positions include 380-383, glutamate 403, and arginine 461; that span reads LGMQ. Catalysis depends on residues histidine 506 and glutamate 508.

The protein belongs to the CTP synthase family. Homotetramer.

The enzyme catalyses UTP + L-glutamine + ATP + H2O = CTP + L-glutamate + ADP + phosphate + 2 H(+). It carries out the reaction L-glutamine + H2O = L-glutamate + NH4(+). The catalysed reaction is UTP + NH4(+) + ATP = CTP + ADP + phosphate + 2 H(+). It participates in pyrimidine metabolism; CTP biosynthesis via de novo pathway; CTP from UDP: step 2/2. With respect to regulation, allosterically activated by GTP, when glutamine is the substrate; GTP has no effect on the reaction when ammonia is the substrate. The allosteric effector GTP functions by stabilizing the protein conformation that binds the tetrahedral intermediate(s) formed during glutamine hydrolysis. Inhibited by the product CTP, via allosteric rather than competitive inhibition. In terms of biological role, catalyzes the ATP-dependent amination of UTP to CTP with either L-glutamine or ammonia as the source of nitrogen. Regulates intracellular CTP levels through interactions with the four ribonucleotide triphosphates. The chain is CTP synthase from Chlamydia pneumoniae (Chlamydophila pneumoniae).